Reading from the N-terminus, the 55-residue chain is Large ribosomal subunit protein bL33 (55 aa).

Belongs to the bacterial ribosomal protein bL33 family.

In Phenylobacterium zucineum (strain HLK1), this protein is Large ribosomal subunit protein bL33.